A 256-amino-acid chain; its full sequence is DNA repair protein RecO (256 aa).

It belongs to the RecO family.

Its function is as follows. Involved in DNA repair and RecF pathway recombination. In Streptococcus pneumoniae serotype 19F (strain G54), this protein is DNA repair protein RecO.